The sequence spans 113 residues: Putative pterin-4-alpha-carbinolamine dehydratase (113 aa).

The protein belongs to the pterin-4-alpha-carbinolamine dehydratase family.

The enzyme catalyses (4aS,6R)-4a-hydroxy-L-erythro-5,6,7,8-tetrahydrobiopterin = (6R)-L-erythro-6,7-dihydrobiopterin + H2O. The chain is Putative pterin-4-alpha-carbinolamine dehydratase from Idiomarina loihiensis (strain ATCC BAA-735 / DSM 15497 / L2-TR).